A 526-amino-acid chain; its full sequence is Adenylosuccinate synthetase (526 aa).

GTP-binding positions include 102–108 (GDEGKGK) and 130–132 (GHT). Asp103 functions as the Proton acceptor in the catalytic mechanism. Positions 103 and 130 each coordinate Mg(2+). Residues 103–106 (DEGK), 128–131 (NAGH), Thr219, Arg233, Asn310, Thr325, and Arg392 contribute to the IMP site. The Proton donor role is filled by His131. 388-394 (TTTGRTR) provides a ligand contact to substrate. GTP-binding positions include Arg394, 420 to 422 (KVD), and 502 to 504 (GVG).

Belongs to the adenylosuccinate synthetase family. As to quaternary structure, homodimer. It depends on Mg(2+) as a cofactor.

It localises to the cytoplasm. The catalysed reaction is IMP + L-aspartate + GTP = N(6)-(1,2-dicarboxyethyl)-AMP + GDP + phosphate + 2 H(+). Its pathway is purine metabolism; AMP biosynthesis via de novo pathway; AMP from IMP: step 1/2. In terms of biological role, plays an important role in the de novo pathway and in the salvage pathway of purine nucleotide biosynthesis. Catalyzes the first committed step in the biosynthesis of AMP from IMP. This chain is Adenylosuccinate synthetase, found in Phaeodactylum tricornutum (strain CCAP 1055/1).